A 197-amino-acid polypeptide reads, in one-letter code: 3-isopropylmalate dehydratase small subunit (197 aa).

Belongs to the LeuD family. LeuD type 1 subfamily. In terms of assembly, heterodimer of LeuC and LeuD.

The catalysed reaction is (2R,3S)-3-isopropylmalate = (2S)-2-isopropylmalate. Its pathway is amino-acid biosynthesis; L-leucine biosynthesis; L-leucine from 3-methyl-2-oxobutanoate: step 2/4. Functionally, catalyzes the isomerization between 2-isopropylmalate and 3-isopropylmalate, via the formation of 2-isopropylmaleate. The sequence is that of 3-isopropylmalate dehydratase small subunit from Mycobacterium sp. (strain JLS).